The primary structure comprises 1356 residues: DNA-directed RNA polymerase subunit beta (1356 aa).

The protein belongs to the RNA polymerase beta chain family. The RNAP catalytic core consists of 2 alpha, 1 beta, 1 beta' and 1 omega subunit. When a sigma factor is associated with the core the holoenzyme is formed, which can initiate transcription.

The enzyme catalyses RNA(n) + a ribonucleoside 5'-triphosphate = RNA(n+1) + diphosphate. Functionally, DNA-dependent RNA polymerase catalyzes the transcription of DNA into RNA using the four ribonucleoside triphosphates as substrates. This is DNA-directed RNA polymerase subunit beta from Stutzerimonas stutzeri (strain A1501) (Pseudomonas stutzeri).